Consider the following 1214-residue polypeptide: Brassinosteroid LRR receptor kinase BRL3 (1214 aa).

The N-terminal stretch at 1–29 is a signal peptide; the sequence is MAAVRVVAPAPSVLLLVAAAVVLLHLARA. N-linked (GlcNAc...) asparagine glycosylation occurs at Asn-61. A Cys pair 1 motif is present at residues 69 to 76; that stretch reads CAWAGVSC. LRR repeat units lie at residues 103-127, 131-155, 156-177, 178-202, 204-228, 230-250, 252-276, 277-302, 303-325, 327-351, 353-375, 377-400, 401-427, 429-451, 452-476, 478-500, 502-525, 526-549, 550-572, 573-597, 599-621, and 650-673; these read LSAL…GSPR, PCAL…FLAS, CGGL…YPFP, PSLR…SLTG, HGIQ…PCTE, SVLD…FVAM, PANL…EFGG, CANL…LVDC, RRLE…TFLV, LQAL…LSIL, KTLV…SFGQ, RFLQ…VITN, ISSL…ASRC, LLEV…LCSS, LPSL…LSNC, NLES…ILFL, KLVD…CFNS, TALE…ITRC, VNLI…GFGN, LQNL…LGSC, NLIW…LAAQ, and GVLF…HLCS. 4 N-linked (GlcNAc...) asparagine glycosylation sites follow: Asn-145, Asn-163, Asn-197, and Asn-210. Asn-254, Asn-264, and Asn-279 each carry an N-linked (GlcNAc...) asparagine glycan. N-linked (GlcNAc...) asparagine glycosylation is found at Asn-400 and Asn-413. A glycan (N-linked (GlcNAc...) asparagine) is linked at Asn-466. N-linked (GlcNAc...) asparagine glycans are attached at residues Asn-512 and Asn-524. N-linked (GlcNAc...) asparagine glycosylation occurs at Asn-561. Tyr-678 serves as a coordination point for brassinolide. LRR repeat units lie at residues 689–712, 713–736, 738–760, and 762–786; these read NGSM…SFGN, MTYL…AFTG, KGIG…GFGC, and HFLA…QLIT. Positions 799–806 match the Cys pair 2 motif; the sequence is CGIPLNPC. The helical transmembrane segment at 829 to 849 threads the bilayer; it reads SVFLAVTLSVLILFSLLIIHY. The Protein kinase domain maps to 913-1196; that stretch reads FCAETLIGSG…FQVDSGSNFL (284 aa). ATP-binding positions include 919-927, Lys-941, 987-989, 993-996, 1039-1044, and Asp-1057; these read IGSGGFGEV, EYM, SLDF, and DMKSSN. The active-site Proton acceptor is the Asp-1039.

The protein belongs to the protein kinase superfamily. Ser/Thr protein kinase family. Highly expressed in roots. Expressed at low levels in shoots.

The protein resides in the cell membrane. The enzyme catalyses L-seryl-[protein] + ATP = O-phospho-L-seryl-[protein] + ADP + H(+). It carries out the reaction L-threonyl-[protein] + ATP = O-phospho-L-threonyl-[protein] + ADP + H(+). In terms of biological role, may be involved in brassenosteroid (BR) perception in roots. This Oryza sativa subsp. japonica (Rice) protein is Brassinosteroid LRR receptor kinase BRL3.